Reading from the N-terminus, the 251-residue chain is MSEALPLSPAEFEQALRAKGAYYHIHHPYHVAMYEGRATREQIQGWVANRFYYQVNIPMKDAAILANCPDREVRREWIQRLLDHDGAPGEDGGIEAWLRLGQAVGLDPDQLRSQELVLPGVRFAVDAYVNFARRASWQEAASSSLTELFAPQIHQSRLDSWPQHYPWIDPAGYEYFRTRLGQARRDVEHGLTITLQHYTTRAAQERMLEILQFKLDILWSMLDAMSMAYELHRPPYHTVTQQRVWHKGIAL.

This sequence belongs to the PqqC family.

The catalysed reaction is 6-(2-amino-2-carboxyethyl)-7,8-dioxo-1,2,3,4,7,8-hexahydroquinoline-2,4-dicarboxylate + 3 O2 = pyrroloquinoline quinone + 2 H2O2 + 2 H2O + H(+). It functions in the pathway cofactor biosynthesis; pyrroloquinoline quinone biosynthesis. Ring cyclization and eight-electron oxidation of 3a-(2-amino-2-carboxyethyl)-4,5-dioxo-4,5,6,7,8,9-hexahydroquinoline-7,9-dicarboxylic-acid to PQQ. The chain is Pyrroloquinoline-quinone synthase from Pseudomonas putida (strain W619).